Here is a 708-residue protein sequence, read N- to C-terminus: Ubiquitin thioesterase ZRANB1 (708 aa).

A RanBP2-type 1 zinc finger spans residues 3–33 (ERGIKWACEYCTYENWPSAIKCTMCRAQRPS). 4 residues coordinate Zn(2+): cysteine 10, cysteine 13, cysteine 24, and cysteine 27. Positions 38 to 73 (TEDPFKSGSSDVGRDWDPSSTEGGSSPLICPDSSAR) are disordered. RanBP2-type zinc fingers lie at residues 84–113 (NANK…QRRT) and 149–178 (RTQH…PRPN). Positions 90, 93, 104, 107, 155, 158, 169, and 172 each coordinate Zn(2+). Residues 200–225 (RARWRGSCSSGNSQRRSPPATKRDSE) are disordered. Polar residues predominate over residues 206-215 (SCSSGNSQRR). 2 ANK repeats span residues 260-290 (KKTD…SGGD) and 313-340 (YTLV…QQAA). The TRAF-binding stretch occupies residues 392-641 (PTVQEKLFDE…LSAQELGNEE (250 aa)). The OTU domain maps to 432–592 (LYALWNRTAG…RGHFSALVAM (161 aa)). Cysteine 443 functions as the Nucleophile in the catalytic mechanism. Histidine 585 acts as the Proton acceptor in catalysis.

It belongs to the peptidase C64 family. As to quaternary structure, interacts with TRAF6. Interacts with APC. In terms of tissue distribution, widely expressed.

The protein localises to the cytoplasm. It is found in the nucleus. It catalyses the reaction Thiol-dependent hydrolysis of ester, thioester, amide, peptide and isopeptide bonds formed by the C-terminal Gly of ubiquitin (a 76-residue protein attached to proteins as an intracellular targeting signal).. In terms of biological role, ubiquitin thioesterase, which specifically hydrolyzes 'Lys-29'-linked and 'Lys-33'-linked diubiquitin. Also cleaves 'Lys-63'-linked chains, but with 40-fold less efficiency compared to 'Lys-29'-linked ones. Positive regulator of the Wnt signaling pathway that deubiquitinates APC protein, a negative regulator of Wnt-mediated transcription. Acts as a regulator of autophagy by mediating deubiquitination of PIK3C3/VPS34, thereby promoting autophagosome maturation. Plays a role in the regulation of cell morphology and cytoskeletal organization. Required in the stress fiber dynamics and cell migration. The chain is Ubiquitin thioesterase ZRANB1 from Homo sapiens (Human).